A 443-amino-acid polypeptide reads, in one-letter code: ATP-dependent protease ATPase subunit HslU (443 aa).

ATP is bound by residues Ile18 and 60 to 65 (GVGKTE). A disordered region spans residues 139-158 (AKNNWGQNETPAEPSSARQS). ATP contacts are provided by Asp256, Glu321, and Arg393.

The protein belongs to the ClpX chaperone family. HslU subfamily. In terms of assembly, a double ring-shaped homohexamer of HslV is capped on each side by a ring-shaped HslU homohexamer. The assembly of the HslU/HslV complex is dependent on binding of ATP.

It is found in the cytoplasm. Functionally, ATPase subunit of a proteasome-like degradation complex; this subunit has chaperone activity. The binding of ATP and its subsequent hydrolysis by HslU are essential for unfolding of protein substrates subsequently hydrolyzed by HslV. HslU recognizes the N-terminal part of its protein substrates and unfolds these before they are guided to HslV for hydrolysis. This Erwinia tasmaniensis (strain DSM 17950 / CFBP 7177 / CIP 109463 / NCPPB 4357 / Et1/99) protein is ATP-dependent protease ATPase subunit HslU.